The following is a 383-amino-acid chain: Sphingosine kinase 1 (383 aa).

One can recognise a DAGKc domain in the interval 12-159; the sequence is PRPCRVLVLL…MNLLSLHTAS (148 aa). Residues 22-24 and 54-58 contribute to the ATP site; these read NPR and TERQN. Residue 79-82 participates in substrate binding; that stretch reads SGDG. Asp-81 (proton donor/acceptor) is an active-site residue. ATP-binding positions include Glu-86 and 111-113; that span reads GSG. 2 consecutive short sequence motifs (nuclear export signal) follow at residues 147–155 and 161–169; these read LSPMNLLSL and RQLYSVLSL. Position 178 (Asp-178) interacts with substrate. Residues Arg-185 and Arg-191 each coordinate ATP. Thr-193 carries the post-translational modification Phosphothreonine. A Phosphoserine modification is found at Ser-225. Residue 340 to 342 coordinates ATP; it reads DGE. Residues 363–383 form a disordered region; the sequence is GSSDSPSGRDSQRRPPPEEPI. The span at 372–383 shows a compositional bias: basic and acidic residues; it reads DSQRRPPPEEPI.

In terms of assembly, interacts with ACY1. Binds to calmodulin. Interacts with SPHKAP. Interacts with CIB1, the interaction occurs in a calcium-dependent manner. Interacts with TRAF2. Interacts with EEF1A1; the interaction enhances SPHK1 kinase activity. Mg(2+) is required as a cofactor. Expressed in microglia (at protein level).

Its subcellular location is the cytoplasm. It localises to the nucleus. The protein localises to the cell membrane. The protein resides in the endosome membrane. It is found in the membrane. Its subcellular location is the clathrin-coated pit. It localises to the synapse. It carries out the reaction a sphingoid base + ATP = a sphingoid 1-phosphate + ADP + H(+). The enzyme catalyses L-seryl-[protein] + acetyl-CoA = O-acetyl-L-seryl-[protein] + CoA. The catalysed reaction is sphinganine + ATP = sphinganine 1-phosphate + ADP + H(+). It catalyses the reaction sphing-4-enine + ATP = sphing-4-enine 1-phosphate + ADP + H(+). It carries out the reaction 1-O-hexadecyl-2-amino-sn-glycerol + ATP = 1-O-hexadecyl-2-desoxy-2-amino-sn-glycero-3-phosphate + ADP + H(+). Acetyltransferase activity increases in presence of the kinase substrate, sphingosine. In Purkinje cells, kinase activity on sphingosine increases in presence of VEGFA. In neurons, kinase activity increases during the first 24h in presence of Amyloid-beta protein 42 to decrease after 96h. Its function is as follows. Catalyzes the phosphorylation of sphingosine to form sphingosine 1-phosphate (SPP), a lipid mediator with both intra- and extracellular functions. Also acts on D-erythro-sphingosine and to a lesser extent sphinganine, but not other lipids, such as D,L-threo-dihydrosphingosine, N,N-dimethylsphingosine, diacylglycerol, ceramide, or phosphatidylinositol. In contrast to proapoptotic SPHK2, has a negative effect on intracellular ceramide levels, enhances cell growth and inhibits apoptosis. Involved in the regulation of inflammatory response and neuroinflammation. Via the product sphingosine 1-phosphate, stimulates TRAF2 E3 ubiquitin ligase activity, and promotes activation of NF-kappa-B in response to TNF signaling leading to IL17 secretion. In response to TNF and in parallel to NF-kappa-B activation, negatively regulates RANTES induction through p38 MAPK signaling pathway. Involved in endocytic membrane trafficking induced by sphingosine, recruited to dilate endosomes, also plays a role on later stages of endosomal maturation and membrane fusion independently of its kinase activity. In Purkinje cells, seems to be also involved in the regulation of autophagosome-lysosome fusion upon VEGFA. In terms of biological role, has serine acetyltransferase activity on PTGS2/COX2 in an acetyl-CoA dependent manner. The acetyltransferase activity increases in presence of the kinase substrate, sphingosine. During neuroinflammation, through PTGS2 acetylation, promotes neuronal secretion of specialized preresolving mediators (SPMs), especially 15-R-lipoxin A4, which results in an increase of phagocytic microglia. The polypeptide is Sphingosine kinase 1 (Sphk1) (Rattus norvegicus (Rat)).